The following is an 899-amino-acid chain: Core protein VP3 (899 aa).

Positions 1–22 are disordered; that stretch reads MAEPPDAATPKTSPYLKGDELS.

It belongs to the orbivirus VP3 family.

Its subcellular location is the virion. Its function is as follows. The VP3 protein is one of the five proteins (with VP1, VP4, VP6 and VP7) which form the inner capsid of the virus. In Antilocapra americana (Pronghorn), this protein is Core protein VP3 (Segment-3).